The primary structure comprises 100 residues: NADH-quinone oxidoreductase subunit K (100 aa).

Helical transmembrane passes span 2-22 (ITLT…LVGI), 29-49 (LMLF…LAAF), and 63-83 (FFII…LIIW).

It belongs to the complex I subunit 4L family. NDH-1 is composed of 14 different subunits. Subunits NuoA, H, J, K, L, M, N constitute the membrane sector of the complex.

Its subcellular location is the cell inner membrane. It carries out the reaction a quinone + NADH + 5 H(+)(in) = a quinol + NAD(+) + 4 H(+)(out). Functionally, NDH-1 shuttles electrons from NADH, via FMN and iron-sulfur (Fe-S) centers, to quinones in the respiratory chain. The immediate electron acceptor for the enzyme in this species is believed to be ubiquinone. Couples the redox reaction to proton translocation (for every two electrons transferred, four hydrogen ions are translocated across the cytoplasmic membrane), and thus conserves the redox energy in a proton gradient. The sequence is that of NADH-quinone oxidoreductase subunit K from Nitratiruptor sp. (strain SB155-2).